The primary structure comprises 312 residues: MQRKLDSEPLRTRIYIDGYNFYYGCLRGTPYKWLDLLPLFEKHILPSILVTDNHGQIRAWRLLESPSIKYFTAKIIESVARAGDSVSSQARYHTALRKLHDGRIELIEGYYAVNKMKVKIVDPENPDKAPRECREIQAWKVEEKQSDVNLALQAYHDSITGQVDHAVIVTNDTDIAPALQMIRAHTDVRIGVVVPTSGQNRSANTDLIKFAHWKREHINSGELAACQLPRVIPGRKPTIKPESWYGQPELLQEILDLAIPVRGSRAAAFKWMEQPNQFLSGERPIELVETAEGATRVLQYIHSWIAQQEELP.

In terms of domain architecture, NYN spans 14 to 210 (IYIDGYNFYY…RSANTDLIKF (197 aa)).

It carries out the reaction 4-(6-hydroxypyridin-3-yl)-4-oxobutanoate + 2 NADH + O2 + 2 H(+) = 2,5-dihydroxypyridine + succinate semialdehyde + 2 NAD(+) + H2O. Its pathway is alkaloid degradation; nicotine degradation. In terms of biological role, involved in the nicotine degradation. Catalyzes the cleavage of 6-hydroxy-3-succinoylpyridine (HSP) by incorporation of oxygen at the 3-position to produce to 2,5-dihydroxypyridine (DHP) and succinic semialdehyde. This is 6-hydroxy-3-succinoylpyridine 3-monooxygenase HspA from Pseudomonas putida (strain DSM 28022 / S16).